We begin with the raw amino-acid sequence, 447 residues long: Argininosuccinate synthase (447 aa).

Residues Ala17–Ser25 and Ala43 each bind ATP. Tyr99 provides a ligand contact to L-citrulline. Positions 129 and 131 each coordinate ATP. L-aspartate contacts are provided by Thr131, Asn135, and Asp136. Asn135 provides a ligand contact to L-citrulline. Residue Asp136 participates in ATP binding. L-citrulline is bound by residues Arg139 and Ser192. An ATP-binding site is contributed by Asp194. 3 residues coordinate L-citrulline: Thr201, Glu203, and Glu280.

It belongs to the argininosuccinate synthase family. Type 2 subfamily. Homotetramer.

It is found in the cytoplasm. The enzyme catalyses L-citrulline + L-aspartate + ATP = 2-(N(omega)-L-arginino)succinate + AMP + diphosphate + H(+). The protein operates within amino-acid biosynthesis; L-arginine biosynthesis; L-arginine from L-ornithine and carbamoyl phosphate: step 2/3. The chain is Argininosuccinate synthase from Escherichia fergusonii (strain ATCC 35469 / DSM 13698 / CCUG 18766 / IAM 14443 / JCM 21226 / LMG 7866 / NBRC 102419 / NCTC 12128 / CDC 0568-73).